We begin with the raw amino-acid sequence, 113 residues long: Hydrogenase maturation factor HypA (113 aa).

His2 serves as a coordination point for Ni(2+). Zn(2+) contacts are provided by Cys73, Cys76, Cys89, and Cys92.

The protein belongs to the HypA/HybF family.

Involved in the maturation of [NiFe] hydrogenases. Required for nickel insertion into the metal center of the hydrogenase. In Alkalilimnicola ehrlichii (strain ATCC BAA-1101 / DSM 17681 / MLHE-1), this protein is Hydrogenase maturation factor HypA.